The primary structure comprises 130 residues: Endoglucanase 2 (130 aa).

Residues H47, D98, and E107 contribute to the active site.

Belongs to the glycosyl hydrolase 9 (cellulase E) family.

It carries out the reaction Endohydrolysis of (1-&gt;4)-beta-D-glucosidic linkages in cellulose, lichenin and cereal beta-D-glucans.. Its function is as follows. Involved in ripening fruit process. The polypeptide is Endoglucanase 2 (CEL2) (Persea americana (Avocado)).